The following is a 303-amino-acid chain: GTPase Era (303 aa).

In terms of domain architecture, Era-type G spans 7–174 (KSGFVAILGR…IDTLSEKLDE (168 aa)). Positions 15–22 (GRPNVGKS) are G1. 15-22 (GRPNVGKS) is a binding site for GTP. Residues 41 to 45 (QTTRN) are G2. A G3 region spans residues 62–65 (DTPG). Residues 62 to 66 (DTPGI) and 124 to 127 (NKID) each bind GTP. The tract at residues 124–127 (NKID) is G4. The segment at 153–155 (ISA) is G5. One can recognise a KH type-2 domain in the interval 205-283 (TREEVPHSIA…YLETWVKIKN (79 aa)).

This sequence belongs to the TRAFAC class TrmE-Era-EngA-EngB-Septin-like GTPase superfamily. Era GTPase family. In terms of assembly, monomer.

The protein resides in the cytoplasm. Its subcellular location is the cell membrane. Its function is as follows. An essential GTPase that binds both GDP and GTP, with rapid nucleotide exchange. Plays a role in 16S rRNA processing and 30S ribosomal subunit biogenesis and possibly also in cell cycle regulation and energy metabolism. The polypeptide is GTPase Era (Lactococcus lactis subsp. lactis (strain IL1403) (Streptococcus lactis)).